A 2067-amino-acid chain; its full sequence is Negative regulator of mitosis (2067 aa).

Residues 100-118 (SLAIPQTTSQQSNRPSGSE) are compositionally biased toward polar residues. Disordered stretches follow at residues 100–132 (SLAIPQTTSQQSNRPSGSESLDGKESRRSSTSK), 332–408 (ESIP…DDFA), and 452–480 (GSQSSTIHPGGLRQSIGAGSTRGSFGFNP). Positions 336 to 347 (SHRKKKRRDTGG) match the Nuclear localization signal motif. Positions 336-355 (SHRKKKRRDTGGTRSKRRSS) are enriched in basic residues. The span at 384 to 396 (WNASVMSHSQYST) shows a compositional bias: polar residues. 4 PC repeats span residues 1434–1465 (AGIMGIGLLYCNSQHRRMSEVMLSEIENADQE), 1482–1520 (AAGFALGFINLGKGKDLKGMRDMHIVERLLAVAVGTKNV), 1532–1562 (GATIALAIIFMKTNDETLAQKVDIPDTTVRF), and 1625–1659 (GLCFALGLRFAGSPDPTVRDILLSYLDQFIRISRL). The tract at residues 2020–2042 (FPSESDEEKRDRQETGSMPSSGH) is disordered.

This sequence belongs to the APC1 family.

Functionally, negative regulator of mitosis in E.nidulans. This protein is part of a regulatory pathway that includes the nimA protein kinase. It is required to prevent premature entry into mitosis. Mutations to this protein both cause cells to enter mitosis and prevent them from leaving mitosis. In Emericella nidulans (strain FGSC A4 / ATCC 38163 / CBS 112.46 / NRRL 194 / M139) (Aspergillus nidulans), this protein is Negative regulator of mitosis (bimE).